A 212-amino-acid polypeptide reads, in one-letter code: Orotate phosphoribosyltransferase (212 aa).

5-phospho-alpha-D-ribose 1-diphosphate is bound by residues Arg94, Lys98, His100, and 120-128 (EDLISTGGS). Ser124 serves as a coordination point for orotate.

Belongs to the purine/pyrimidine phosphoribosyltransferase family. PyrE subfamily. As to quaternary structure, homodimer. Mg(2+) serves as cofactor.

It carries out the reaction orotidine 5'-phosphate + diphosphate = orotate + 5-phospho-alpha-D-ribose 1-diphosphate. The protein operates within pyrimidine metabolism; UMP biosynthesis via de novo pathway; UMP from orotate: step 1/2. In terms of biological role, catalyzes the transfer of a ribosyl phosphate group from 5-phosphoribose 1-diphosphate to orotate, leading to the formation of orotidine monophosphate (OMP). The polypeptide is Orotate phosphoribosyltransferase (Bacillus pumilus (strain SAFR-032)).